A 74-amino-acid polypeptide reads, in one-letter code: Conotoxin SIIID (74 aa).

Positions 1 to 20 are cleaved as a signal peptide; sequence MMSKLGVLLTVCLLLFPLTA. The propeptide occupies 21-53; it reads LPLDGDQPADQLEDRMQDDISSEQYPSFVRRQK. Disulfide bonds link Cys54/Cys71, Cys55/Cys73, and Cys61/Cys74.

It belongs to the conotoxin M superfamily. Post-translationally, three disulfide isomers have been synthesized and tested. SIIID with the disulfide pairing 1-4;2-5;3-6 is the most active. In terms of tissue distribution, expressed by the venom duct.

Its subcellular location is the secreted. Functionally, the short synthetic peptide SIIID (range 54-74, with disulfide pairing 1-4, 2-5 and 3-6) reversibly inhibits human alpha-7/CHRNA7 acetylcholine receptor (IC(50)=880 nM). Shows a paralytic effect in fish. The chain is Conotoxin SIIID from Conus striatus (Striated cone).